Consider the following 46-residue polypeptide: Iota-conotoxin RXIA (46 aa).

4-hydroxyproline; partial is present on residues P2 and P11. 4 disulfides stabilise this stretch: C5/C19, C12/C22, C18/C27, and C21/C38. 4-hydroxyproline is present on P29. A D-phenylalanine modification is found at F44.

Belongs to the conotoxin I1 superfamily. In terms of processing, the natural D-Phe-44 form of the peptide is more potent than the L-Phe-44 form. As to expression, expressed by the venom duct.

The protein localises to the secreted. In terms of biological role, iota-conotoxins bind to voltage-gated sodium channels and act as agonists by shifting the voltage-dependence of activation to more hyperpolarized levels. This toxin acts on Nav1.6/SCN8A &gt; Nav1.2/SCN2A &gt; Nav1.7/SCN9A sodium channels. Produces general excitatory symptoms upon intracorporeal injection and repetitive action potentials in the frog cutaneous pectoris muscle. Natural peptide (with D-Phe) is active on nerve, but not on muscle. Synthetic peptide (with L-Phe) is not active on both nerve and muscle. This Conus radiatus (Rayed cone) protein is Iota-conotoxin RXIA.